Reading from the N-terminus, the 427-residue chain is MLDIKWIRENAEVLDAALAKRGAEPLSQGLIALDEKRRSIIQSVQDMQSRRNAASKEIGAAMAQKNTELAEKLKGEVADIKTSLPAAEEEERVLTAELNDALSRIPNIPLDDVPVGKDEHDNVVKHSWGAKPAWNHKPKEHYEIGEELGYMDFERAAKLSGSRFTVLTSQLARLERALGQFMLDLHTSEHGYTEVSSPLMVRDEAMFGTGQLPKFAEDSFRTTGGHWLIPTAEVTLTNLVSGDILDQEKLPLRFTALTPSFRSEAGSAGRDTRGMLRQHQFWKCELVSITDAESSIAEHERMTACAEEVLKRLGLHYRVMTLSTGDMGFGARKTYDLEVWLPGQDTYREISSCSVCGDFQARRMNARYRGKDDKGTKFVHTLNGSGTAVGRCLIAVLENYLNDDGSVTVPDALLPYMGGLKRIERAA.

Thr-231 to Glu-233 contributes to the L-serine binding site. ATP is bound at residue Arg-262 to Glu-264. Residue Glu-285 coordinates L-serine. Glu-349 to Ser-352 contributes to the ATP binding site. Ser-385 serves as a coordination point for L-serine.

This sequence belongs to the class-II aminoacyl-tRNA synthetase family. Type-1 seryl-tRNA synthetase subfamily. As to quaternary structure, homodimer. The tRNA molecule binds across the dimer.

It localises to the cytoplasm. The catalysed reaction is tRNA(Ser) + L-serine + ATP = L-seryl-tRNA(Ser) + AMP + diphosphate + H(+). It catalyses the reaction tRNA(Sec) + L-serine + ATP = L-seryl-tRNA(Sec) + AMP + diphosphate + H(+). It functions in the pathway aminoacyl-tRNA biosynthesis; selenocysteinyl-tRNA(Sec) biosynthesis; L-seryl-tRNA(Sec) from L-serine and tRNA(Sec): step 1/1. Functionally, catalyzes the attachment of serine to tRNA(Ser). Is also able to aminoacylate tRNA(Sec) with serine, to form the misacylated tRNA L-seryl-tRNA(Sec), which will be further converted into selenocysteinyl-tRNA(Sec). This chain is Serine--tRNA ligase, found in Rhizobium rhizogenes (strain K84 / ATCC BAA-868) (Agrobacterium radiobacter).